Consider the following 712-residue polypeptide: MNQSPSLIEQGISQQHLKTLSCANVLTLAYQSLGVIYGDLSTSPLYVYKTTFSGKLSLHEDDEEIFGVFSFIFWTFTLIALFKYVFIVLSADDNGEGGTFALYSLLCRYAKLSILPNHQEMDEKLSTYATGSPGETRQSAAVKSFFEKHPKSQKCLLLFVLLGTCMAIGDSVLTPTISVLSAVSGVKLKIPNLHENYVVIIACIILVAIFSVQRYGTHRVAFIFAPISTAWLLSISSIGVYNTIKWNPRIVSALSPVYMYKFLRSTGVEGWVSLGGVVLSITGVETMFADLGHFSSLSIKVAFSFFVYPCLILAYMGEAAFLSKHHEDIQQSFYKAIPEPVFWPVFIVATFAAVVGSQAVISATFSIISQCCALDCFPRVKIIHTSSKIHGQIYIPEVNWMLMCLCLAVTIGLRDTNMMGHAYGLAVTSVMLVTTCLMTLVMTIVWKQRIITVLAFVVFFGSIELLYFSSCVYKVPEGGWIPILLSLTFMAVMYIWNYGTTKKHEFDVENKVSMDRIVSLGPSIGMVRVPGIGLVYSNLVTGVPAVFGHFVTNLPAFHKILVFVCVKSVQVPYVGEEERFVISRVGPKEYGMFRSVVRYGYRDVPREMYDFESRLVSAIVEFVETEPGLEEEEMSSVRRKKEECMEIMEAKEAGVAYILGHSYAKAKQSSSVLKKLAVNVVFAFMSTNCRGTDVVLNVPHTSLLEVGMVYYV.

Residues 1-19 lie on the Cytoplasmic side of the membrane; the sequence is MNQSPSLIEQGISQQHLKT. The helical transmembrane segment at 20–40 threads the bilayer; it reads LSCANVLTLAYQSLGVIYGDL. The Extracellular segment spans residues 41 to 67; the sequence is STSPLYVYKTTFSGKLSLHEDDEEIFG. A helical transmembrane segment spans residues 68-88; it reads VFSFIFWTFTLIALFKYVFIV. Residues 89 to 154 are Cytoplasmic-facing; the sequence is LSADDNGEGG…FFEKHPKSQK (66 aa). The helical transmembrane segment at 155-175 threads the bilayer; that stretch reads CLLLFVLLGTCMAIGDSVLTP. Residues 176 to 189 lie on the Extracellular side of the membrane; that stretch reads TISVLSAVSGVKLK. The chain crosses the membrane as a helical span at residues 190–210; that stretch reads IPNLHENYVVIIACIILVAIF. Residues 211–219 are Cytoplasmic-facing; it reads SVQRYGTHR. Residues 220 to 240 traverse the membrane as a helical segment; sequence VAFIFAPISTAWLLSISSIGV. Residues 241–267 are Extracellular-facing; that stretch reads YNTIKWNPRIVSALSPVYMYKFLRSTG. The helical transmembrane segment at 268–288 threads the bilayer; that stretch reads VEGWVSLGGVVLSITGVETMF. Residues 289–300 are Cytoplasmic-facing; the sequence is ADLGHFSSLSIK. The chain crosses the membrane as a helical span at residues 301-321; the sequence is VAFSFFVYPCLILAYMGEAAF. Topologically, residues 322-340 are extracellular; that stretch reads LSKHHEDIQQSFYKAIPEP. Residues 341–361 traverse the membrane as a helical segment; the sequence is VFWPVFIVATFAAVVGSQAVI. The Cytoplasmic segment spans residues 362–392; it reads SATFSIISQCCALDCFPRVKIIHTSSKIHGQ. A helical transmembrane segment spans residues 393-413; the sequence is IYIPEVNWMLMCLCLAVTIGL. Over 414-424 the chain is Extracellular; that stretch reads RDTNMMGHAYG. A helical transmembrane segment spans residues 425 to 445; sequence LAVTSVMLVTTCLMTLVMTIV. The Cytoplasmic segment spans residues 446–449; the sequence is WKQR. Residues 450–470 form a helical membrane-spanning segment; sequence IITVLAFVVFFGSIELLYFSS. Residues 471–474 lie on the Extracellular side of the membrane; it reads CVYK. The chain crosses the membrane as a helical span at residues 475–495; that stretch reads VPEGGWIPILLSLTFMAVMYI. At 496–712 the chain is on the cytoplasmic side; it reads WNYGTTKKHE…LLEVGMVYYV (217 aa).

It belongs to the HAK/KUP transporter (TC 2.A.72.3) family. In terms of tissue distribution, detected in the whole mature plant but preferentially expressed in roots and stems, and in potassium-starved plants.

The protein resides in the cell membrane. High-affinity potassium transporter that could play a major role in the uptake of potassium from the rhizosphere. May act as a low-affinity potassium transporter under high potassium concentrations. Could also transport rubidium. The sequence is that of Potassium transporter 1 (POT1) from Arabidopsis thaliana (Mouse-ear cress).